The sequence spans 1089 residues: Electroneutral sodium bicarbonate exchanger 1 (1089 aa).

Residues 1–476 lie on the Extracellular side of the membrane; sequence MPAGSNEPDG…DYRDALSLQC (476 aa). A disordered region spans residues 55 to 90; that stretch reads LGRQSHRHHRTHGQKHRRRGGRGKGASQGEEGLEAL. Residues 58–76 show a composition bias toward basic residues; sequence QSHRHHRTHGQKHRRRGGR. Residues 477–497 traverse the membrane as a helical segment; it reads LASFLFLYCACMSPVITFGGL. Topologically, residues 498–505 are cytoplasmic; that stretch reads LGEATEGR. A helical membrane pass occupies residues 506-526; it reads ISAIESLFGASMTGIAYSLFA. Residues 527–563 are Extracellular-facing; sequence GQPLTILGSTGPVLVFEKILFKFCKDYALSYLSLRAL. A helical transmembrane segment spans residues 564-584; that stretch reads IGLWTAFLCIVLVATDASSLV. Topologically, residues 585 to 593 are cytoplasmic; it reads CYITRFTEE. A helical membrane pass occupies residues 594–614; the sequence is AFASLICIIFIYEAIEKLIHL. At 615–685 the chain is on the extracellular side; that stretch reads AETYPIHMHS…EFMGSACGHH (71 aa). Disulfide bonds link C634–C682 and C636–C670. N644 carries N-linked (GlcNAc) asparagine glycosylation. A helical membrane pass occupies residues 686-706; the sequence is GPYTPDVLFWSCILFFATFIV. At 707–729 the chain is on the cytoplasmic side; it reads SSTLKTFKTSRYFPTRVRSMVSD. The chain crosses the membrane as a helical span at residues 730 to 750; that stretch reads FAVFLTIFTMVVLDFLIGVPS. Over 751-776 the chain is Extracellular; sequence PKLQVPNVFKPTRDDRGWFINPIGPN. Residues 777-797 traverse the membrane as a helical segment; the sequence is PWWTVIAAIIPALLCTILIFM. Over 798–822 the chain is Cytoplasmic; it reads DQQITAVIINRKEHKLKKGCGYHLD. The chain crosses the membrane as a helical span at residues 823–843; sequence LLMVAVMLGVCSIMGLPWFVA. Over 844-879 the chain is Extracellular; it reads ATVLSITHVNSLKLESECSAPGEQPKFLGIREQRVT. Residues 880–900 form a helical membrane-spanning segment; the sequence is GLMIFVLMGCSVFMTAVLKFI. Topologically, residues 901 to 902 are cytoplasmic; the sequence is PM. A helical transmembrane segment spans residues 903 to 923; that stretch reads PVLYGVFLYMGVSSLQGIQFF. Residues 924 to 960 lie on the Extracellular side of the membrane; the sequence is DRLKLFGMPAKHQPDFIYLRHVPLRKVHLFTLVQLTC. The chain crosses the membrane as a helical span at residues 961–981; the sequence is LVLLWVIKASPAAIVFPMMVL. Topologically, residues 982-1089 are cytoplasmic; it reads ALVFVRKVMD…GNTKEKSPFN (108 aa).

This sequence belongs to the anion exchanger (TC 2.A.31) family. In terms of assembly, homodimer. Expressed in the hippocampal neurons (at protein level). Highly expressed in brain with lower levels in lung, kidney and heart. In the kidney, there is high expression in the inner medulla, localized to the inner medullary collecting duct. In the brain, there seems to be three transcripts each having a different expression pattern. The smaller 3kb transcript has highest expression levels in the thalamus and the largest 9.5kb transcript has highest levels in the substantia nigra. The middle transcript of 4.4kb, which is also the main transcript in kidney, is highly expressed in thalamus. Hence, the highest levels are observed in the thalamus, amygdala and caudate nucleus and very low expression was seen in the corpus callosum.

The protein localises to the cell membrane. The protein resides in the apical cell membrane. It is found in the basolateral cell membrane. It localises to the cytoplasmic vesicle. Its subcellular location is the secretory vesicle. The protein localises to the synaptic vesicle membrane. It catalyses the reaction 2 hydrogencarbonate(out) + chloride(in) + Na(+)(out) = 2 hydrogencarbonate(in) + chloride(out) + Na(+)(in). Its function is as follows. Mediates electroneutral sodium- and carbonate-dependent chloride-HCO3(-) exchange with a Na(+):HCO3(-) stoichiometry of 2:1. Plays a major role in pH regulation in neurons. Mediates sodium reabsorption in the renal cortical collecting ducts. This chain is Electroneutral sodium bicarbonate exchanger 1, found in Mus musculus (Mouse).